The chain runs to 446 residues: Probable glycine dehydrogenase (decarboxylating) subunit 1 (446 aa).

Belongs to the GcvP family. N-terminal subunit subfamily. As to quaternary structure, the glycine cleavage system is composed of four proteins: P, T, L and H. In this organism, the P 'protein' is a heterodimer of two subunits.

The catalysed reaction is N(6)-[(R)-lipoyl]-L-lysyl-[glycine-cleavage complex H protein] + glycine + H(+) = N(6)-[(R)-S(8)-aminomethyldihydrolipoyl]-L-lysyl-[glycine-cleavage complex H protein] + CO2. In terms of biological role, the glycine cleavage system catalyzes the degradation of glycine. The P protein binds the alpha-amino group of glycine through its pyridoxal phosphate cofactor; CO(2) is released and the remaining methylamine moiety is then transferred to the lipoamide cofactor of the H protein. The protein is Probable glycine dehydrogenase (decarboxylating) subunit 1 of Coxiella burnetii (strain CbuK_Q154) (Coxiella burnetii (strain Q154)).